Here is a 325-residue protein sequence, read N- to C-terminus: Tetraacyldisaccharide 4'-kinase (325 aa).

55–62 (TAGGNGKT) contacts ATP.

It belongs to the LpxK family.

It catalyses the reaction a lipid A disaccharide + ATP = a lipid IVA + ADP + H(+). Its pathway is glycolipid biosynthesis; lipid IV(A) biosynthesis; lipid IV(A) from (3R)-3-hydroxytetradecanoyl-[acyl-carrier-protein] and UDP-N-acetyl-alpha-D-glucosamine: step 6/6. In terms of biological role, transfers the gamma-phosphate of ATP to the 4'-position of a tetraacyldisaccharide 1-phosphate intermediate (termed DS-1-P) to form tetraacyldisaccharide 1,4'-bis-phosphate (lipid IVA). The sequence is that of Tetraacyldisaccharide 4'-kinase from Enterobacter sp. (strain 638).